The following is a 556-amino-acid chain: Formate--tetrahydrofolate ligase (556 aa).

65 to 72 (TPAGEGKS) contributes to the ATP binding site.

It belongs to the formate--tetrahydrofolate ligase family.

The enzyme catalyses (6S)-5,6,7,8-tetrahydrofolate + formate + ATP = (6R)-10-formyltetrahydrofolate + ADP + phosphate. It participates in one-carbon metabolism; tetrahydrofolate interconversion. This chain is Formate--tetrahydrofolate ligase, found in Streptococcus uberis (strain ATCC BAA-854 / 0140J).